The following is a 362-amino-acid chain: Phospho-N-acetylmuramoyl-pentapeptide-transferase (362 aa).

10 consecutive transmembrane segments (helical) span residues A28–L48, G72–W92, V100–L120, V134–T154, V170–S190, G201–V221, L241–P261, V265–A285, I290–V310, and T339–L359.

It belongs to the glycosyltransferase 4 family. MraY subfamily. The cofactor is Mg(2+).

The protein localises to the cell inner membrane. It catalyses the reaction UDP-N-acetyl-alpha-D-muramoyl-L-alanyl-gamma-D-glutamyl-meso-2,6-diaminopimeloyl-D-alanyl-D-alanine + di-trans,octa-cis-undecaprenyl phosphate = di-trans,octa-cis-undecaprenyl diphospho-N-acetyl-alpha-D-muramoyl-L-alanyl-D-glutamyl-meso-2,6-diaminopimeloyl-D-alanyl-D-alanine + UMP. It functions in the pathway cell wall biogenesis; peptidoglycan biosynthesis. In terms of biological role, catalyzes the initial step of the lipid cycle reactions in the biosynthesis of the cell wall peptidoglycan: transfers peptidoglycan precursor phospho-MurNAc-pentapeptide from UDP-MurNAc-pentapeptide onto the lipid carrier undecaprenyl phosphate, yielding undecaprenyl-pyrophosphoryl-MurNAc-pentapeptide, known as lipid I. This Granulibacter bethesdensis (strain ATCC BAA-1260 / CGDNIH1) protein is Phospho-N-acetylmuramoyl-pentapeptide-transferase.